A 730-amino-acid polypeptide reads, in one-letter code: Dual function macrocyclase-peptidase POPB (730 aa).

Residues Ser-577, Asp-661, and His-698 each act as charge relay system in the active site.

This sequence belongs to the peptidase S9A family. As to quaternary structure, monomer. As to expression, expressed in the pileus (cap) and lamellae where it colocalizes with amanitin.

The catalysed reaction is Hydrolysis of Pro-|-Xaa &gt;&gt; Ala-|-Xaa in oligopeptides.. Functionally, dual function macrocyclase-peptidase involved in the biosynthesis of the highly toxic amanitin toxin family of macrocycles. Cleaves peptide bonds on the C-terminal side of prolyl residues. The enzyme first removes 10 residues from the N-terminus of a 35-residue substrate. Conformational trapping of the 25 amino-acid peptide forces the enzyme to release this intermediate rather than proceed to macrocyclization. The enzyme rebinds the 25 amino-acid peptide in a different conformation and catalyzes macrocyclization of the N-terminal eight residues. The sequence is that of Dual function macrocyclase-peptidase POPB from Amanita bisporigera (Destroying angel).